A 39-amino-acid polypeptide reads, in one-letter code: Cytochrome b559 subunit beta (39 aa).

The chain crosses the membrane as a helical span at residues 14 to 30; sequence WLAVHGLAVPTVSFLGS. His18 contacts heme.

The protein belongs to the PsbE/PsbF family. Heterodimer of an alpha subunit and a beta subunit. PSII is composed of 1 copy each of membrane proteins PsbA, PsbB, PsbC, PsbD, PsbE, PsbF, PsbH, PsbI, PsbJ, PsbK, PsbL, PsbM, PsbT, PsbX, PsbY, PsbZ, Psb30/Ycf12, at least 3 peripheral proteins of the oxygen-evolving complex and a large number of cofactors. It forms dimeric complexes. Heme b serves as cofactor.

Its subcellular location is the plastid. The protein resides in the chloroplast thylakoid membrane. Its function is as follows. This b-type cytochrome is tightly associated with the reaction center of photosystem II (PSII). PSII is a light-driven water:plastoquinone oxidoreductase that uses light energy to abstract electrons from H(2)O, generating O(2) and a proton gradient subsequently used for ATP formation. It consists of a core antenna complex that captures photons, and an electron transfer chain that converts photonic excitation into a charge separation. The chain is Cytochrome b559 subunit beta from Lotus japonicus (Lotus corniculatus var. japonicus).